A 464-amino-acid polypeptide reads, in one-letter code: Probable multidrug resistance protein NorM (464 aa).

The next 12 helical transmembrane spans lie at leucine 22–alanine 42, valine 64–alanine 84, phenylalanine 104–isoleucine 124, leucine 142–leucine 162, methionine 172–glycine 192, alanine 204–phenylalanine 224, phenylalanine 258–alanine 278, valine 288–glycine 308, glycine 326–glutamate 346, isoleucine 358–isoleucine 378, glycine 384–tryptophan 404, and valine 410–isoleucine 430.

It belongs to the multi antimicrobial extrusion (MATE) (TC 2.A.66.1) family.

Its subcellular location is the cell membrane. Its function is as follows. Multidrug efflux pump. This is Probable multidrug resistance protein NorM (norM) from Thermotoga maritima (strain ATCC 43589 / DSM 3109 / JCM 10099 / NBRC 100826 / MSB8).